Here is a 196-residue protein sequence, read N- to C-terminus: Zinc finger C2H2 protein ECU03_0940 (196 aa).

C2H2-type zinc fingers lie at residues tyrosine 130–histidine 155 and tyrosine 166–histidine 191.

The protein is Zinc finger C2H2 protein ECU03_0940 of Encephalitozoon cuniculi (strain GB-M1) (Microsporidian parasite).